Here is a 101-residue protein sequence, read N- to C-terminus: uncharacterized protein (101 aa).

The next 2 membrane-spanning stretches (helical) occupy residues 52–72 (VVFI…VKLL) and 75–95 (LWRL…SLLG).

The protein resides in the endoplasmic reticulum membrane. This is an uncharacterized protein from Schizosaccharomyces pombe (strain 972 / ATCC 24843) (Fission yeast).